We begin with the raw amino-acid sequence, 37 residues long: Large ribosomal subunit protein bL36 (37 aa).

It belongs to the bacterial ribosomal protein bL36 family.

This is Large ribosomal subunit protein bL36 from Sulfurihydrogenibium sp. (strain YO3AOP1).